The chain runs to 744 residues: Catalase-peroxidase (744 aa).

The tryptophyl-tyrosyl-methioninium (Trp-Tyr) (with M-257) cross-link spans 108–231 (WHSAGTYRIS…LAAVQMGLIY (124 aa)). The active-site Proton acceptor is the H109. Positions 231 to 257 (YVNPEGPNGNPDPIAAARDIRETFRRM) form a cross-link, tryptophyl-tyrosyl-methioninium (Tyr-Met) (with W-108). Residue H272 coordinates heme b. Residues 353–372 (ANQWKPKDGAGAGTVPDAHD) are disordered.

Belongs to the peroxidase family. Peroxidase/catalase subfamily. Homodimer or homotetramer. The cofactor is heme b. Post-translationally, formation of the three residue Trp-Tyr-Met cross-link is important for the catalase, but not the peroxidase activity of the enzyme.

The enzyme catalyses H2O2 + AH2 = A + 2 H2O. It catalyses the reaction 2 H2O2 = O2 + 2 H2O. Bifunctional enzyme with both catalase and broad-spectrum peroxidase activity. In Frankia casuarinae (strain DSM 45818 / CECT 9043 / HFP020203 / CcI3), this protein is Catalase-peroxidase.